Here is a 147-residue protein sequence, read N- to C-terminus: Large ribosomal subunit protein bL9 (147 aa).

This sequence belongs to the bacterial ribosomal protein bL9 family.

Functionally, binds to the 23S rRNA. This Clostridium kluyveri (strain NBRC 12016) protein is Large ribosomal subunit protein bL9.